Consider the following 148-residue polypeptide: Large-conductance mechanosensitive channel (148 aa).

3 helical membrane-spanning segments follow: residues 21–41 (IDLA…DSVV), 45–65 (IMPL…KFLV), and 92–112 (GNFL…FIIV).

It belongs to the MscL family. As to quaternary structure, homopentamer.

The protein resides in the cell inner membrane. In terms of biological role, channel that opens in response to stretch forces in the membrane lipid bilayer. May participate in the regulation of osmotic pressure changes within the cell. The chain is Large-conductance mechanosensitive channel from Bordetella petrii (strain ATCC BAA-461 / DSM 12804 / CCUG 43448).